The chain runs to 533 residues: Monogalactosyldiacylglycerol synthase 1, chloroplastic (533 aa).

His-155 and Pro-189 together coordinate a 1,2-diacyl-sn-glycero-3-phospho-(1'-sn-glycerol). His-155 is a UDP binding site. The tract at residues 192 to 215 (QLPRSYNFLVKHGTLWKMTYYGTS) is required for binding to diacyl glycerol. UDP-binding positions include Arg-324, Phe-413, Ile-414, 434-438 (GTIAE), and Glu-456.

Belongs to the glycosyltransferase 28 family. In terms of assembly, homodimer. In terms of tissue distribution, expressed in roots, stems, leaves, flowers, siliques and seeds.

The protein resides in the plastid. It localises to the chloroplast inner membrane. The catalysed reaction is a 1,2-diacyl-sn-glycerol + UDP-alpha-D-galactose = a 1,2-diacyl-3-O-(beta-D-galactosyl)-sn-glycerol + UDP + H(+). It carries out the reaction 1,2-di-(9Z,12Z-octadecadienoyl)-sn-glycerol + UDP-alpha-D-galactose = 1,2-di-(9Z,12Z-octadecadienoyl)-3-beta-D-galactosyl-sn-glycerol + UDP + H(+). The enzyme catalyses 1-(9Z-octadecenoyl)-2-hexadecanoyl-sn-glycerol + UDP-alpha-D-galactose = 1-(9Z-octadecenoyl)-2-hexadecanoyl-3-beta-D-galactosyl-sn-glycerol + UDP + H(+). It catalyses the reaction 1,2-di-(9Z-octadecenoyl)-sn-glycerol + UDP-alpha-D-galactose = 1,2-di-(9Z-octadecenoyl)-3-beta-D-galactosyl-sn-glycerol + UDP + H(+). Activated by phosphatidate (PA) and phosphatidylglycerol (PG). Inhibited by galvestine-1. Involved in the synthesis of the major structural component of photosynthetic membranes. Required for proper thylakoid membrane biogenesis. Does not discriminate between prokaryotic (18:1/16:0) or eukaryotic (18:2/18:2) 1,2-diacylglycerol species, but operates with some preference for the prokaryotic one. Is responsible for most galactolipid synthesis in chloroplasts. Required for the formation of thylakoid membranes and functional photosynthetic electron transport during cotyledons greening in young seedlings. May link galactolipid synthesis with the coordinated transcriptional regulation of chloroplasts and other organelles during cotyledon greening. This chain is Monogalactosyldiacylglycerol synthase 1, chloroplastic, found in Arabidopsis thaliana (Mouse-ear cress).